The chain runs to 337 residues: Biotin synthase 1 (337 aa).

Positions 1 to 23 (MSSVLTQPLAFHPPRPAVQPREH) are disordered. Residues 57–284 (TRVEFATLLS…TARVRLSAGR (228 aa)) enclose the Radical SAM core domain. Residues Cys72, Cys76, and Cys79 each contribute to the [4Fe-4S] cluster site. The [2Fe-2S] cluster site is built by Cys116, Cys147, Cys207, and Arg279.

The protein belongs to the radical SAM superfamily. Biotin synthase family. In terms of assembly, homodimer. It depends on [4Fe-4S] cluster as a cofactor. [2Fe-2S] cluster is required as a cofactor.

It carries out the reaction (4R,5S)-dethiobiotin + (sulfur carrier)-SH + 2 reduced [2Fe-2S]-[ferredoxin] + 2 S-adenosyl-L-methionine = (sulfur carrier)-H + biotin + 2 5'-deoxyadenosine + 2 L-methionine + 2 oxidized [2Fe-2S]-[ferredoxin]. It functions in the pathway cofactor biosynthesis; biotin biosynthesis; biotin from 7,8-diaminononanoate: step 2/2. In terms of biological role, catalyzes the conversion of dethiobiotin (DTB) to biotin by the insertion of a sulfur atom into dethiobiotin via a radical-based mechanism. This Polaromonas sp. (strain JS666 / ATCC BAA-500) protein is Biotin synthase 1.